The chain runs to 344 residues: Outer membrane protein B (344 aa).

Positions 1–30 (MNSKMLKHLRLATLSFSMFFGIVSSPAVYA) are cleaved as a signal peptide.

Belongs to the chlamydial OMP family.

The protein resides in the cell outer membrane. This chain is Outer membrane protein B (ompB), found in Chlamydia pneumoniae (Chlamydophila pneumoniae).